We begin with the raw amino-acid sequence, 1100 residues long: Exportin-T (1100 aa).

It belongs to the exportin family. As to quaternary structure, interacts with CEX1, GSP1, GSP2, NSP1, NUP2 and UTP8.

The protein resides in the nucleus. It localises to the cytoplasm. In terms of biological role, tRNA nucleus export receptor which facilitates tRNA translocation across the nuclear pore complex. Preferentially interacts with tRNAs with mature 5'- and 3'-termini and does not distinguish between intron-containing and spliced tRNAs. In the nucleus binds to tRNA and to the Ran-GTPases GSP1 or GSP2 in their active GTP-bound form. Docking of this trimeric complex to the nuclear pore complex (NPC) is mediated through binding to nucleoporins. Upon transit of a nuclear export complex into the cytoplasm, disassembling of the complex and hydrolysis of Ran-GTP to Ran-GDP cause release of the tRNA from the export receptor. The directionality of nuclear export is thought to be conferred by an asymmetric distribution of the GTP- and GDP-bound forms of Ran between the cytoplasm and nucleus. The protein is Exportin-T (LOS1) of Saccharomyces cerevisiae (strain ATCC 204508 / S288c) (Baker's yeast).